The chain runs to 341 residues: Large ribosomal subunit protein uL29m (341 aa).

Residues 44–74 (LARTRYTKPKPKPPRRSKVRAPTQTTHHDTD) form a disordered region. Positions 48–62 (RYTKPKPKPPRRSKV) are enriched in basic residues.

It belongs to the universal ribosomal protein uL29 family. In terms of assembly, component of the mitochondrial large ribosomal subunit. Mature mitochondrial ribosomes consist of a small (37S) and a large (54S) subunit. The 37S subunit contains at least 33 different proteins and 1 molecule of RNA (15S). The 54S subunit contains at least 45 different proteins and 1 molecule of RNA (21S).

Its subcellular location is the mitochondrion. The protein is Large ribosomal subunit protein uL29m (MRPL4) of Eremothecium gossypii (strain ATCC 10895 / CBS 109.51 / FGSC 9923 / NRRL Y-1056) (Yeast).